A 544-amino-acid polypeptide reads, in one-letter code: Chaperonin GroEL (544 aa).

Residues 29–32 (TLGP), lysine 50, 86–90 (DGTTT), glycine 413, 479–481 (DAA), and aspartate 495 each bind ATP.

The protein belongs to the chaperonin (HSP60) family. In terms of assembly, forms a cylinder of 14 subunits composed of two heptameric rings stacked back-to-back. Interacts with the co-chaperonin GroES.

It localises to the cytoplasm. The catalysed reaction is ATP + H2O + a folded polypeptide = ADP + phosphate + an unfolded polypeptide.. Together with its co-chaperonin GroES, plays an essential role in assisting protein folding. The GroEL-GroES system forms a nano-cage that allows encapsulation of the non-native substrate proteins and provides a physical environment optimized to promote and accelerate protein folding. In Borrelia duttonii (strain Ly), this protein is Chaperonin GroEL.